Here is an 800-residue protein sequence, read N- to C-terminus: MSSNYVPPDVSRSKAKEIALVNKAIQLANQGDYDEALNIIDQLPPSDNTRQVKAYILVKKYLDLLKDTNTPLKDRINYANQLVAISQRYPNVFSPQDAENIVEYLKEEEKVKELLNKLNDALSQADYNLALQYAKQLNDILNNTQTNNLVKALQIVASVPPPPTPEGTITSFLSQLVDYYKNASQAYSEASKYEPMFRPVADTLSTSAEMLEELLTNVNQILTTHSVSNAEDALKNIENIVNESKSLPIAPITEDILNIAEEMVKQIQIDNEANQYLHSSVKALDEGDYTKAYEDAEKATELLGPNAPQSVKNYTNALAILTKTEPLPSPPSQIKGMQDLLSYFSNVGNALSKNYELTSKASSIYPAFKPIAEAYALHLKDNNHLVDALSKINKKPPKNSDQFAFMSAVLKQISQETAPQNFVTQTYQQIGSQLSTATSESANQYSLLAEANNLIDQANAVITQVNNMMNNANNLSLGEVSQLYKNAADTLEKQALPPMQEAYKILQELAKQGAINQDSVNQVEENIQNIQNTITEFDMLSTAYEYLDQANAVITQVNNMMNNANNLSLGEVSQLYKNAADTLEKQALPPMQEAYKILQELAKQGAINQDSVNQVEENIQNIQNTITEFNLLAVAYGYMNEGYNQLQKLSNVSSPSQGVIIARSAKHYFEQASREFERANVNPNPAKPAIEQATDLILGFDELEKAQNTIAPERKHIAGARPPNPPTNAELAKYYEQLSNAYNTAAEYAYNAEKYFAEAESIAESESETTESENNETTESTANSEGEKQEGEHGARLIRV.

4 coiled-coil regions span residues 98-130, 447-475, 514-567, and 606-633; these read AENIVEYLKEEEKVKELLNKLNDALSQADYNLA, LLAEANNLIDQANAVITQVNNMMNNANNL, AINQ…ANNL, and AINQDSVNQVEENIQNIQNTITEFNLLA. Positions 759–800 are disordered; it reads AESIAESESETTESENNETTESTANSEGEKQEGEHGARLIRV. Positions 761 to 776 are enriched in acidic residues; the sequence is SIAESESETTESENNE. The segment covering 785–800 has biased composition (basic and acidic residues); it reads EGEKQEGEHGARLIRV.

The protein localises to the virion. In Acidianus convivator (ATV), this protein is Structural protein ORF800.